A 280-amino-acid chain; its full sequence is Tryptophan 2,3-dioxygenase (280 aa).

Residues 47–51, tyrosine 109, and arginine 113 contribute to the substrate site; that span reads FVVQH. Histidine 236 is a heme binding site. Residue threonine 250 participates in substrate binding.

Belongs to the tryptophan 2,3-dioxygenase family. Homotetramer. The cofactor is heme.

The catalysed reaction is L-tryptophan + O2 = N-formyl-L-kynurenine. It functions in the pathway amino-acid degradation; L-tryptophan degradation via kynurenine pathway; L-kynurenine from L-tryptophan: step 1/2. Its function is as follows. Heme-dependent dioxygenase that catalyzes the oxidative cleavage of the L-tryptophan (L-Trp) pyrrole ring and converts L-tryptophan to N-formyl-L-kynurenine. Catalyzes the oxidative cleavage of the indole moiety. This Serratia proteamaculans (strain 568) protein is Tryptophan 2,3-dioxygenase.